The primary structure comprises 332 residues: Autoinducer 2 import system permease protein LsrD (332 aa).

The next 7 membrane-spanning stretches (helical) occupy residues 5 to 25, 43 to 63, 83 to 103, 116 to 136, 160 to 180, 210 to 230, and 259 to 279; these read LNWESALLALLIAEILLFGAL, ICIGIVALPLTLVIISGGIDI, GWPLWLAVSLTLLLGLLCGLF, LVITLGTLYLYGGGALLLSGM, LGGLPLPLVLFAIITFFFWLL, IPYVLYGLVGVASAVAALVMV, and IYGGSGSILGTALAALLVGYL.

The protein belongs to the binding-protein-dependent transport system permease family. AraH/RbsC subfamily. The complex is composed of two ATP-binding proteins (LsrA), two transmembrane proteins (LsrC and LsrD) and a solute-binding protein (LsrB).

The protein resides in the cell inner membrane. In terms of biological role, part of the ABC transporter complex LsrABCD involved in autoinducer 2 (AI-2) import. Probably responsible for the translocation of the substrate across the membrane. This is Autoinducer 2 import system permease protein LsrD (lsrD) from Klebsiella pneumoniae subsp. pneumoniae (strain ATCC 700721 / MGH 78578).